A 482-amino-acid chain; its full sequence is Kynurenine 3-monooxygenase (482 aa).

Belongs to the aromatic-ring hydroxylase family. KMO subfamily. The cofactor is FAD.

It localises to the mitochondrion outer membrane. It carries out the reaction L-kynurenine + NADPH + O2 + H(+) = 3-hydroxy-L-kynurenine + NADP(+) + H2O. The protein operates within cofactor biosynthesis; NAD(+) biosynthesis; quinolinate from L-kynurenine: step 1/3. Catalyzes the hydroxylation of L-kynurenine (L-Kyn) to form 3-hydroxy-L-kynurenine (L-3OHKyn). Required for synthesis of quinolinic acid. The chain is Kynurenine 3-monooxygenase from Phaeosphaeria nodorum (strain SN15 / ATCC MYA-4574 / FGSC 10173) (Glume blotch fungus).